The primary structure comprises 244 residues: Krueppel-like factor 9 (244 aa).

A disordered region spans residues 80 to 142; it reads SVCSDSLESP…AKGKHASEKR (63 aa). The residue at position 122 (S122) is a Phosphoserine. 3 consecutive C2H2-type zinc fingers follow at residues 143-167, 173-197, and 203-225; these read HKCP…YRVH, FPCT…YRTH, and FRCP…ARRH.

It belongs to the Sp1 C2H2-type zinc-finger protein family. In terms of assembly, interacts with ZZEF1. Epidermis (at protein level).

It localises to the nucleus. In terms of biological role, transcription factor that binds to GC box promoter elements. Selectively activates mRNA synthesis from genes containing tandem repeats of GC boxes but represses genes with a single GC box. Acts as an epidermal circadian transcription factor regulating keratinocyte proliferation. The protein is Krueppel-like factor 9 (KLF9) of Homo sapiens (Human).